A 919-amino-acid polypeptide reads, in one-letter code: 2-oxoadipate dehydrogenase complex component E1 (919 aa).

Residues Lys-183 and Lys-188 each carry the N6-succinyllysine modification. The segment at 299–320 is disordered; it reads GKTRGRQQSRQDGDYSPDNSAQ. N6-succinyllysine is present on residues Lys-800 and Lys-818.

The protein belongs to the alpha-ketoglutarate dehydrogenase family. The 2-oxoadipate dehydrogenase complex is composed of OADH (2-oxoadipate dehydrogenase; E1a), DLST (dihydrolipoamide succinyltransferase; E2) and DLD (dihydrolipoamide dehydrogenase; E3). E1a functional unit is a dimer. Interacts with DLST. Thiamine diphosphate is required as a cofactor.

Its subcellular location is the mitochondrion. It carries out the reaction N(6)-[(R)-lipoyl]-L-lysyl-[protein] + 2-oxoadipate + H(+) = N(6)-[(R)-S(8)-glutaryldihydrolipoyl]-L-lysyl-[protein] + CO2. Its pathway is amino-acid degradation. Its function is as follows. 2-oxoadipate dehydrogenase (E1a) component of the 2-oxoadipate dehydrogenase complex (OADHC). Participates in the first step, rate limiting for the overall conversion of 2-oxoadipate (alpha-ketoadipate) to glutaryl-CoA and CO(2) catalyzed by the whole OADHC. Catalyzes the irreversible decarboxylation of 2-oxoadipate via the thiamine diphosphate (ThDP) cofactor and subsequent transfer of the decarboxylated acyl intermediate on an oxidized dihydrolipoyl group that is covalently amidated to the E2 enzyme (dihydrolipoyllysine-residue succinyltransferase or DLST). Can catalyze the decarboxylation of 2-oxoglutarate in vitro, but at a much lower rate than 2-oxoadipate. Responsible for the last step of L-lysine, L-hydroxylysine and L-tryptophan catabolism with the common product being 2-oxoadipate. In Homo sapiens (Human), this protein is 2-oxoadipate dehydrogenase complex component E1 (DHTKD1).